A 517-amino-acid polypeptide reads, in one-letter code: UDP-N-acetylmuramoylalanine--D-glutamate ligase (517 aa).

143–149 (GTNGKTT) provides a ligand contact to ATP.

Belongs to the MurCDEF family.

The protein localises to the cytoplasm. It catalyses the reaction UDP-N-acetyl-alpha-D-muramoyl-L-alanine + D-glutamate + ATP = UDP-N-acetyl-alpha-D-muramoyl-L-alanyl-D-glutamate + ADP + phosphate + H(+). Its pathway is cell wall biogenesis; peptidoglycan biosynthesis. In terms of biological role, cell wall formation. Catalyzes the addition of glutamate to the nucleotide precursor UDP-N-acetylmuramoyl-L-alanine (UMA). The sequence is that of UDP-N-acetylmuramoylalanine--D-glutamate ligase from Leifsonia xyli subsp. xyli (strain CTCB07).